Consider the following 632-residue polypeptide: 1-deoxy-D-xylulose-5-phosphate synthase (632 aa).

Thiamine diphosphate contacts are provided by residues His-79 and 120–122 (GHA). Residue Asp-152 coordinates Mg(2+). Thiamine diphosphate is bound by residues 153-154 (GA), Asn-181, Phe-293, and Glu-377. Residue Asn-181 participates in Mg(2+) binding.

The protein belongs to the transketolase family. DXPS subfamily. Homodimer. It depends on Mg(2+) as a cofactor. Thiamine diphosphate is required as a cofactor.

It catalyses the reaction D-glyceraldehyde 3-phosphate + pyruvate + H(+) = 1-deoxy-D-xylulose 5-phosphate + CO2. It functions in the pathway metabolic intermediate biosynthesis; 1-deoxy-D-xylulose 5-phosphate biosynthesis; 1-deoxy-D-xylulose 5-phosphate from D-glyceraldehyde 3-phosphate and pyruvate: step 1/1. Its function is as follows. Catalyzes the acyloin condensation reaction between C atoms 2 and 3 of pyruvate and glyceraldehyde 3-phosphate to yield 1-deoxy-D-xylulose-5-phosphate (DXP). The protein is 1-deoxy-D-xylulose-5-phosphate synthase of Parabacteroides distasonis (strain ATCC 8503 / DSM 20701 / CIP 104284 / JCM 5825 / NCTC 11152).